The chain runs to 104 residues: SOSS complex subunit C (104 aa).

Belongs to the SOSS-C family. Belongs to the multiprotein complex Integrator. Component of the SOSS complex, composed of SOSS-B (SOSS-B1/NABP2 or SOSS-B2/NABP1), SOSS-A/INTS3 and SOSS-C/INIP.

The protein resides in the nucleus. Its function is as follows. Component of the SOSS complex, a multiprotein complex that functions downstream of the MRN complex to promote DNA repair and G2/M checkpoint. The SOSS complex associates with single-stranded DNA at DNA lesions and influences diverse endpoints in the cellular DNA damage response including cell-cycle checkpoint activation, recombinational repair and maintenance of genomic stability. Required for efficient homologous recombination-dependent repair of double-strand breaks (DSBs). This is SOSS complex subunit C (INIP) from Taeniopygia guttata (Zebra finch).